A 366-amino-acid polypeptide reads, in one-letter code: MSNAQEAVKTRHKETSLIFPVLALVVLFLWGSSQTLPVVIAINLLALIGILSSAFSVVRHADVLAHRLGEPYGSLILSLSVVILEVSLISALMATGDAAPTLMRDTLYSIIMIVTGGLVGFSLLLGGRKFATQYMNLFGIKQYLIALFPLAIIVLVFPMALPAANFSTGQALLVALISAAMYGVFLLIQTKTHQSLFVYEHEDDSDDDDPHHGKPSAHSSLWHAIWLIIHLIAVIAVTKMNASSLETLLDSMNAPVAFTGFLVALLILSPEGLGALKAVLNNQVQRAMNLFFGSVLATISLTVPVVTLIAFMTGNELQFALGAPEMVVMVASLVLCHISFSTGRTNVLNGAAHLALFAAYLMTIFA.

Topologically, residues 1 to 16 (MSNAQEAVKTRHKETS) are cytoplasmic. A run of 2 helical transmembrane segments spans residues 17–37 (LIFP…QTLP) and 38–58 (VVIA…FSVV). Over 59–74 (RHADVLAHRLGEPYGS) the chain is Cytoplasmic. The helical transmembrane segment at 75-95 (LILSLSVVILEVSLISALMAT) threads the bilayer. At 96–106 (GDAAPTLMRDT) the chain is on the periplasmic side. A helical transmembrane segment spans residues 107–127 (LYSIIMIVTGGLVGFSLLLGG). The Cytoplasmic segment spans residues 128-143 (RKFATQYMNLFGIKQY). A helical membrane pass occupies residues 144-164 (LIALFPLAIIVLVFPMALPAA). The Periplasmic segment spans residues 165–167 (NFS). The chain crosses the membrane as a helical span at residues 168–188 (TGQALLVALISAAMYGVFLLI). Over 189–216 (QTKTHQSLFVYEHEDDSDDDDPHHGKPS) the chain is Cytoplasmic. A helical membrane pass occupies residues 217–237 (AHSSLWHAIWLIIHLIAVIAV). Over 238-255 (TKMNASSLETLLDSMNAP) the chain is Periplasmic. Residues 256 to 276 (VAFTGFLVALLILSPEGLGAL) form a helical membrane-spanning segment. Topologically, residues 277 to 290 (KAVLNNQVQRAMNL) are cytoplasmic. The chain crosses the membrane as a helical span at residues 291 to 311 (FFGSVLATISLTVPVVTLIAF). At 312-318 (MTGNELQ) the chain is on the periplasmic side. The chain crosses the membrane as a helical span at residues 319–339 (FALGAPEMVVMVASLVLCHIS). At 340–345 (FSTGRT) the chain is on the cytoplasmic side. The chain crosses the membrane as a helical span at residues 346-366 (NVLNGAAHLALFAAYLMTIFA).

Belongs to the Ca(2+):cation antiporter (CaCA) (TC 2.A.19) family.

Its subcellular location is the cell inner membrane. The catalysed reaction is Na(+)(in) + H(+)(out) = Na(+)(out) + H(+)(in). It catalyses the reaction K(+)(in) + H(+)(out) = K(+)(out) + H(+)(in). The enzyme catalyses Ca(2+)(in) + H(+)(out) = Ca(2+)(out) + H(+)(in). Pronounced pH dependence with sodium as substrate. Ca(2+)/H(+) and Na(+)/H(+) antiporter activities are both inhibited by magnesium. Ca(2+)/H(+) activity is inhibited by the proton ionophore carbonyl cyanide m-chlorophenylhydrazone (CCCP). Its function is as follows. Sodium exporter that functions mainly at alkaline pH. Can also function as a potassium/proton and calcium/proton antiporter at alkaline pH. Does not play a major role in calcium export. The K(+)/H(+) antiporter activity may enable E.coli to adapt to K(+) salinity stress and to maintain K(+) homeostasis. This chain is Sodium-potassium/proton antiporter ChaA, found in Escherichia coli (strain K12).